A 469-amino-acid polypeptide reads, in one-letter code: MRRRESRGAKGGGFLTPPPSWHTTRRVYIAMPISERKRSPLIENQESFRVRTGDSPYVRAKHAQLVSKDPNRAISLFWAAINAGDRVDSALKDMVVVLKQLNRFDEGIEAIKSFRYLCPFESQDSIDNLLLELYMKSGRITEVAELLEHKLRTLEQDKHYGGRIKIAKRSHEEQNNKTIEQEKARILGNLAWVHLQLHNYGIAEQYYRNALSLEPDNNKLCNLAICLIRMERTHEAKSLLEDVKQSLGNQWKNEPFCKSFERATEMLAEREQATVADKPEDLLTSSFSDNFSSRCSGGMKGKKALAGTSTELGNIHKTNSHASSESVEQNSPGLTTQPRECKWVDEEVDQSKWDATIGASRKLRFWTVGPVRSLRFGNDYQKNLKSVGTAASTTNDELHQFISSDADCMTSKARKLCPELIKDKEDNEKESERIASESSSAYAKITDIGQRKVLHIDQRKVRHIGQRSV.

The segment at 1-20 (MRRRESRGAKGGGFLTPPPS) is disordered. TPR repeat units follow at residues 88 to 121 (DSAL…CPFE), 124 to 157 (DSID…LEQD), and 184 to 217 (ARIL…EPDN). Residues 139 to 191 (RITEVAELLEHKLRTLEQDKHYGGRIKIAKRSHEEQNNKTIEQEKARILGNLA) adopt a coiled-coil conformation. The segment covering 314–338 (NIHKTNSHASSESVEQNSPGLTTQP) has biased composition (polar residues). The segment at 314 to 339 (NIHKTNSHASSESVEQNSPGLTTQPR) is disordered.

Belongs to the MS5 protein family. Expressed in floral and vegetative organs. Also barely detectable in leaves and stems.

It localises to the nucleus. Functionally, probably involved in the regulation of cell division. The chain is Protein POLLENLESS 3-LIKE 1 from Arabidopsis thaliana (Mouse-ear cress).